The primary structure comprises 336 residues: Fructose-1,6-bisphosphatase class 1 (336 aa).

Mg(2+) is bound by residues E92, D115, L117, and D118. Residues 118-121 (DGSS), N211, Y244, 262-264 (YLY), and K274 each bind substrate. E280 is a binding site for Mg(2+).

This sequence belongs to the FBPase class 1 family. As to quaternary structure, homotetramer. Mg(2+) serves as cofactor.

Its subcellular location is the cytoplasm. It carries out the reaction beta-D-fructose 1,6-bisphosphate + H2O = beta-D-fructose 6-phosphate + phosphate. It functions in the pathway carbohydrate biosynthesis; gluconeogenesis. This is Fructose-1,6-bisphosphatase class 1 from Hahella chejuensis (strain KCTC 2396).